We begin with the raw amino-acid sequence, 400 residues long: Carnosine N-methyltransferase (400 aa).

A disordered region spans residues 1 to 51 (MQRRQRAPPASQPAQDGGRSEDVEVQFSAGRLGSAAPAGPPARGTAEDEER). A compositionally biased stretch (low complexity) spans 28-44 (SAGRLGSAAPAGPPARG). S-adenosyl-L-methionine contacts are provided by Q155, R158, G199, E220, D286, F287, and C303. D307 is a carnosine binding site. Position 315 (Y315) interacts with S-adenosyl-L-methionine. H338 and Y389 together coordinate carnosine.

Belongs to the carnosine N-methyltransferase family. As to quaternary structure, homodimer. Each monomer accommodates one molecule of carnosine in its active pocket, precisely anchoring the histidine imidazole ring such that only N1 is exposed and deprotonated for methylation.

It localises to the cytoplasm. The protein resides in the cytosol. Its subcellular location is the nucleus. The enzyme catalyses carnosine + S-adenosyl-L-methionine = anserine + S-adenosyl-L-homocysteine + H(+). Its function is as follows. N-methyltransferase that catalyzes the formation of anserine (beta-alanyl-N(Pi)-methyl-L-histidine) from carnosine. Anserine, a methylated derivative of carnosine (beta-alanyl-L-histidine), is an abundant constituent of vertebrate skeletal muscles. Also methylates other L-histidine-containing di- and tripeptides such as Gly-Gly-His, Gly-His and homocarnosine (GABA-His). This chain is Carnosine N-methyltransferase, found in Mus musculus (Mouse).